The chain runs to 190 residues: Protein LZIC (190 aa).

Residues 2-63 (ASRGKTETSK…SEFNDSLKKI (62 aa)) adopt a coiled-coil conformation.

This sequence belongs to the CTNNBIP1 family. As to quaternary structure, does not interact with CTNNB1. Ubiquitously expressed, with highest levels in kidney. Up-regulated in several cases of gastric cancers.

In Homo sapiens (Human), this protein is Protein LZIC (LZIC).